We begin with the raw amino-acid sequence, 460 residues long: Elongation factor 1-alpha (460 aa).

The residue at position 2 (Gly-2) is a N,N,N-trimethylglycine. The residue at position 3 (Lys-3) is an N6,N6-dimethyllysine; alternate. N6-methyllysine; alternate is present on Lys-3. The 236-residue stretch at 6–241 folds into the tr-type G domain; that stretch reads KAHINVVVIG…DAIEQPKRPT (236 aa). The tract at residues 15–22 is G1; the sequence is GHVDSGKS. 15–22 lines the GTP pocket; that stretch reads GHVDSGKS. Lys-31 carries the N6-methyllysine modification. A G2 region spans residues 71–75; it reads GITID. Lys-80 bears the N6,N6,N6-trimethyllysine mark. The G3 stretch occupies residues 92-95; that stretch reads DAPG. GTP contacts are provided by residues 92-96 and 154-157; these read DAPGH and NKMD. The tract at residues 154–157 is G4; that stretch reads NKMD. The interval 193-195 is G5; sequence SGF. Lys-317 carries the N6,N6-dimethyllysine; alternate modification. N6-methyllysine; alternate is present on Lys-317. Position 391 is an N6-methyllysine (Lys-391).

This sequence belongs to the TRAFAC class translation factor GTPase superfamily. Classic translation factor GTPase family. EF-Tu/EF-1A subfamily.

Its subcellular location is the cytoplasm. This protein promotes the GTP-dependent binding of aminoacyl-tRNA to the A-site of ribosomes during protein biosynthesis. The protein is Elongation factor 1-alpha (TEF) of Sordaria macrospora.